Here is a 32-residue protein sequence, read N- to C-terminus: Alpha-conotoxin RgIA (32 aa).

Residues 1–19 (SNKRKNAAMLDMIAQHAIR) constitute a propeptide that is removed on maturation. 2 disulfide bridges follow: Cys21/Cys27 and Cys22/Cys31.

Belongs to the conotoxin A superfamily. Post-translationally, the disulfide bond CysI-CysIII is important for alpha-9-alpha-10 subtype inhibition, whereas the bond CysII-CysIV contributes to GABA(B) modulation. Expressed by the venom duct.

The protein resides in the secreted. In terms of biological role, this toxin target two types of receptors, the nicotinic acetylcholine receptor (nAChR) and the G-protein-coupled receptor GABA(B). It specifically inhibits the alpha-9-alpha-10/CHRNA9-CHRNA10 nAChR, with preference for rat receptors. It interacts with the alpha-10(+)/alpha-9(-)interface of the receptor. It shows a two order of magnitude species difference potency for the rat versus human alpha-9-alpha-10 nAChR, due to the Thr-86 located in the alpha-9 nAChR subunit. This toxin also shows inhibition of high voltage-activated (HVA) calcium channels (Cav2.2) by acting on GABA(B) receptors (GABBR1 and GABBR2). In vivo, this toxin produces an acute antinociceptive effect in peripheral nerve-injured rats, which may be related to the inhibition of immune cell buildup at the site of nerve injury. In addition, when intramuscularly injected into rats following chronic constriction injury of the sciatic nerve, this toxin protects peripheral nervous tissues as well as prevents central maladaptive plasticity by inhibiting glial cell activation. The sequence is that of Alpha-conotoxin RgIA from Conus regius (Crown cone).